We begin with the raw amino-acid sequence, 215 residues long: Urease accessory protein UreG (215 aa).

Residues 1–21 form a disordered region; sequence MNAPAPSSARRTKKLPPLRVG. 24-31 serves as a coordination point for GTP; sequence GPVGSGKT.

The protein belongs to the SIMIBI class G3E GTPase family. UreG subfamily. In terms of assembly, homodimer. UreD, UreF and UreG form a complex that acts as a GTP-hydrolysis-dependent molecular chaperone, activating the urease apoprotein by helping to assemble the nickel containing metallocenter of UreC. The UreE protein probably delivers the nickel.

It is found in the cytoplasm. Functionally, facilitates the functional incorporation of the urease nickel metallocenter. This process requires GTP hydrolysis, probably effectuated by UreG. The sequence is that of Urease accessory protein UreG from Burkholderia lata (strain ATCC 17760 / DSM 23089 / LMG 22485 / NCIMB 9086 / R18194 / 383).